Reading from the N-terminus, the 667-residue chain is Sterile alpha motif domain-containing protein 15 (667 aa).

A compositionally biased stretch (acidic residues) spans 1-18; the sequence is MAEVPEDYDSGPDEDGEP. Disordered stretches follow at residues 1 to 108 and 147 to 424; these read MAEV…KSER and SAME…IKSK. 4 stretches are compositionally biased toward basic and acidic residues: residues 19-53, 84-93, 187-196, and 228-266; these read ESER…HEPQ, IAKESKRDVP, ESLRVQHEET, and TKPD…KSSE. Residues 268–277 show a composition bias toward acidic residues; sequence AGLEPPEETQ. Basic and acidic residues-rich tracts occupy residues 284 to 314, 322 to 338, 346 to 364, and 381 to 422; these read MQRK…KSTD, EEIK…KPNE, EMMK…EEKN, and PRVE…EPIK. In terms of domain architecture, SAM spans 538–601; the sequence is WDPEKVAEWI…SRHTRELLEI (64 aa).

The sequence is that of Sterile alpha motif domain-containing protein 15 (SAMD15) from Macaca fascicularis (Crab-eating macaque).